A 254-amino-acid polypeptide reads, in one-letter code: Imidazole glycerol phosphate synthase subunit HisF (254 aa).

Residues Asp11 and Asp130 contribute to the active site.

The protein belongs to the HisA/HisF family. As to quaternary structure, heterodimer of HisH and HisF.

Its subcellular location is the cytoplasm. The catalysed reaction is 5-[(5-phospho-1-deoxy-D-ribulos-1-ylimino)methylamino]-1-(5-phospho-beta-D-ribosyl)imidazole-4-carboxamide + L-glutamine = D-erythro-1-(imidazol-4-yl)glycerol 3-phosphate + 5-amino-1-(5-phospho-beta-D-ribosyl)imidazole-4-carboxamide + L-glutamate + H(+). It participates in amino-acid biosynthesis; L-histidine biosynthesis; L-histidine from 5-phospho-alpha-D-ribose 1-diphosphate: step 5/9. In terms of biological role, IGPS catalyzes the conversion of PRFAR and glutamine to IGP, AICAR and glutamate. The HisF subunit catalyzes the cyclization activity that produces IGP and AICAR from PRFAR using the ammonia provided by the HisH subunit. This is Imidazole glycerol phosphate synthase subunit HisF from Solibacter usitatus (strain Ellin6076).